We begin with the raw amino-acid sequence, 733 residues long: Photosystem I P700 chlorophyll a apoprotein A2 (733 aa).

Helical transmembrane passes span 46-69 (IFASHFGQLAIIFLWTSGNLFHVA), 135-158 (LYNGSLFLLFVAGLFLFAGWLHLQ), 175-199 (LNHHLSGLFGVSSLAWTGHLVHVAI), 273-291 (MAHHHLAIAVVFIIAGHQY), 330-353 (LHFQLGLALASVGVLCSLTAQHMY), 369-395 (AALYSHHQYIAGFIMCGAFAHGAIFFI), 417-439 (AIISHLSWVSLFLGFHTLGLYVH), and 516-534 (FLVHHAIALGLHTTTLILV). Positions 558 and 567 each coordinate [4Fe-4S] cluster. Transmembrane regions (helical) follow at residues 574–595 (AFYLAVFWELNTVSWTVFYFHW) and 642–664 (LSVWAWMFLFGHLIYATGFMFLI). Histidine 653, methionine 661, and tyrosine 669 together coordinate chlorophyll a. Residue tryptophan 670 coordinates phylloquinone. Residues 706 to 726 (LVGLTHFAVGFVLTYAAFVIA) form a helical membrane-spanning segment.

This sequence belongs to the PsaA/PsaB family. In terms of assembly, the PsaA/B heterodimer binds the P700 chlorophyll special pair and subsequent electron acceptors. PSI consists of a core antenna complex that captures photons, and an electron transfer chain that converts photonic excitation into a charge separation. The eukaryotic PSI reaction center is composed of at least 11 subunits. P700 is a chlorophyll a/chlorophyll a' dimer, A0 is one or more chlorophyll a, A1 is one or both phylloquinones and FX is a shared 4Fe-4S iron-sulfur center. serves as cofactor.

It is found in the plastid. The protein localises to the chloroplast thylakoid membrane. It catalyses the reaction reduced [plastocyanin] + hnu + oxidized [2Fe-2S]-[ferredoxin] = oxidized [plastocyanin] + reduced [2Fe-2S]-[ferredoxin]. PsaA and PsaB bind P700, the primary electron donor of photosystem I (PSI), as well as the electron acceptors A0, A1 and FX. PSI is a plastocyanin/cytochrome c6-ferredoxin oxidoreductase, converting photonic excitation into a charge separation, which transfers an electron from the donor P700 chlorophyll pair to the spectroscopically characterized acceptors A0, A1, FX, FA and FB in turn. Oxidized P700 is reduced on the lumenal side of the thylakoid membrane by plastocyanin or cytochrome c6. This chain is Photosystem I P700 chlorophyll a apoprotein A2, found in Ostreococcus tauri.